A 449-amino-acid polypeptide reads, in one-letter code: MMEKHGGKVTSDRRAGRRQHGQRCSASDAAPLVVVVILIVGALFLILGPTGSSSFTVPRIRVVFNEPVHVAVAAPPPPPPPAQMQAGANASSEEDSGLPPPRQLTDPPYSLGRTILGYDARRSAWLAAHPEFPARVAPAGRPRVLVVTGSAPARCPDPDGDHLLLRAFKNKVDYCRIHGLDVFYNTAFLDAEMSGFWAKLPLLRMLMVAHPEAELIWWVDSDAVFTDMLFEIPWERYAVHNLVLHGWEAKVFDEKSWIGVNTGSFLIRNCQWSLDLLDAWAPMGPRGPVRDRYGELFAEELSGRPPFEADDQSALIYLLVTQRQRWGDKVFIESSYDLNGFWEGIVDRYEELRRAGRDDGRWPFVTHFVGCKPCRRYADSYPAERCRRGMERAFNFADDQILKLYGFAHESLNTTAVRRVRNETGEPLDAGDEELGRLLHPTFRAARPT.

A compositionally biased stretch (basic and acidic residues) spans 1–14 (MMEKHGGKVTSDRR). The segment at 1-24 (MMEKHGGKVTSDRRAGRRQHGQRC) is disordered. Over 1–28 (MMEKHGGKVTSDRRAGRRQHGQRCSASD) the chain is Cytoplasmic. A helical; Signal-anchor for type II membrane protein transmembrane segment spans residues 29–49 (AAPLVVVVILIVGALFLILGP). Residues 50–449 (TGSSSFTVPR…HPTFRAARPT (400 aa)) lie on the Lumenal side of the membrane. The disordered stretch occupies residues 74–109 (APPPPPPPAQMQAGANASSEEDSGLPPPRQLTDPPY). Asn89, Asn413, and Asn422 each carry an N-linked (GlcNAc...) asparagine glycan.

This sequence belongs to the glycosyltransferase 34 family.

The protein resides in the golgi apparatus membrane. Functionally, probable glycosyltransferase that may be involved in the biosynthesis of xyloglucan. The chain is Probable glycosyltransferase 5 from Oryza sativa subsp. indica (Rice).